The following is a 132-amino-acid chain: U11/U12 small nuclear ribonucleoprotein 25 kDa protein (132 aa).

A Ubiquitin-like domain is found at 41–132 (MTVRVCKMDG…VSFIKKLRQK (92 aa)).

In terms of assembly, component of the U11/U12 snRNPs that are part of the U12-type spliceosome.

Its subcellular location is the nucleus. The polypeptide is U11/U12 small nuclear ribonucleoprotein 25 kDa protein (SNRNP25) (Homo sapiens (Human)).